We begin with the raw amino-acid sequence, 188 residues long: Ribosome-recycling factor (188 aa).

This sequence belongs to the RRF family.

The protein localises to the cytoplasm. In terms of biological role, responsible for the release of ribosomes from messenger RNA at the termination of protein biosynthesis. May increase the efficiency of translation by recycling ribosomes from one round of translation to another. The chain is Ribosome-recycling factor from Akkermansia muciniphila (strain ATCC BAA-835 / DSM 22959 / JCM 33894 / BCRC 81048 / CCUG 64013 / CIP 107961 / Muc).